A 150-amino-acid chain; its full sequence is Protein SprT-like (150 aa).

The region spanning 6-147 is the SprT-like domain; it reads LQKLTEDISE…CGKCRGKIKR (142 aa). His67 is a Zn(2+) binding site. Glu68 is an active-site residue. His71 contacts Zn(2+).

It belongs to the SprT family. It depends on Zn(2+) as a cofactor.

Its subcellular location is the cytoplasm. This chain is Protein SprT-like (ydcK), found in Bacillus subtilis (strain 168).